The sequence spans 3856 residues: Hybrid PKS-NRPS synthetase traA (3856 aa).

Residues 6 to 438 (PEPIAIVGSG…GTNGHAILEE (433 aa)) form the Ketosynthase family 3 (KS3) domain. Active-site for beta-ketoacyl synthase activity residues include Cys179, His318, and His358. The tract at residues 554–885 (IFTGQGAQWA…FSDALGFVWT (332 aa)) is malonyl-CoA:ACP transacylase (MAT) domain. The N-terminal hotdog fold stretch occupies residues 943-1081 (HELLGVPSPN…GKVTVIYGTP (139 aa)). A dehydratase (DH) domain region spans residues 943–1247 (HELLGVPSPN…LSMKPFSPAT (305 aa)). The PKS/mFAS DH domain occupies 943-1249 (HELLGVPSPN…MKPFSPATAD (307 aa)). His975 acts as the Proton acceptor; for dehydratase activity in catalysis. Positions 1096 to 1249 (MVDIQAEQFY…MKPFSPATAD (154 aa)) are C-terminal hotdog fold. The active-site Proton donor; for dehydratase activity is the Asp1156. Residues 1290-1456 (LACVAQQIVH…RKAGFSGIDS (167 aa)) form a methyltransferase (MT) domain region. The tract at residues 1984–2158 (TYVLVGLSGR…ATSLDIGSIV (175 aa)) is ketoreductase (KR) domain. The 82-residue stretch at 2266–2347 (ADALEILKEL…TLCQQALEKL (82 aa)) folds into the Carrier 1 domain. Ser2307 carries the O-(pantetheine 4'-phosphoryl)serine modification. The segment at 2351–2422 (ILPNVESGGP…SSTPATVLSN (72 aa)) is disordered. 2 stretches are compositionally biased toward low complexity: residues 2357–2369 (SGGP…SKPT) and 2399–2418 (TTSP…TPAT). Residues 2446–2884 (VKTELVSFQQ…FALFSDKELK (439 aa)) form a condensation (C) domain region. The segment at 2910 to 3310 (QIAKENDDKV…GAMVFHNRIA (401 aa)) is adenylation (A) domain. The tract at residues 3403–3429 (SKTDRKALKELPLPQRSNHDTGDNTES) is disordered. A Carrier 2 domain is found at 3428-3507 (ESLTETMLEL…DMTQKIEESL (80 aa)). O-(pantetheine 4'-phosphoryl)serine is present on Ser3467. Residues 3544 to 3768 (VTGSGGFLGK…EMTPIHSAAS (225 aa)) are reductase (R) domain.

It in the C-terminal section; belongs to the NRP synthetase family.

The protein operates within secondary metabolite biosynthesis. In terms of biological role, hybrid PKS-NRPS synthetase; part of the tra gene cluster that produces terrestric acid. The clavatol biosynthesis cluster cla and the terrestric acid cluster tra are both involved in the production of peniphenones and penilactones. The non-reducing PKS claF is responsible for the formation of clavatol from successive condensations of 3 malonyl-CoA units, presumably with a simple acetyl-CoA starter unit, and 2 methylation steps. The esterase claE probably collaborates with claF by catalyzing the hydrolysis of ACP-bound acyl intermediates to free the ACP from stalled intermediates. The clavatol oxidase claD then converts clavatol to hydroxyclavatol. Spontaneous dehydration of hydroxyclavatol leads to the accumulation of the highly active ortho-quinone methide. On the other hand, the PKS-NRPS hybrid traA is involved in the formation of crustosic acid, with the help of traB and traD. The polyketide synthase module (PKS) of traA is responsible for the synthesis of the polyketide backbone via the condensation of an acetyl-CoA starter unit with 3 malonyl-CoA units. The downstream nonribosomal peptide synthetase (NRPS) module then amidates the carboxyl end of the polyketide with L-malic acid. Because traA lacks a designated enoylreductase (ER) domain, the required activity is provided the enoyl reductase traG. Crustosic acid undergoes decarboxylation and isomerization to the terrestric acid, catalyzed by the 2-oxoglutarate-dependent dioxygenase traH. Both acids are further converted to the 2 gamma-butyrolactones (R)-5-methyltetronic acid and (S)-5-carboxylmethyltetronic acid, with involvement of the cytochrome P450 monooxygenase claJ. Spontaneous addition of the methide to these gamma-butyrolactones leads to peniphenone D and penilactone D, which undergo again stereospecific attacking by methide to give penilactones A and B. The sequence is that of Hybrid PKS-NRPS synthetase traA from Penicillium crustosum (Blue mold fungus).